Consider the following 137-residue polypeptide: Small ribosomal subunit protein uS12 (137 aa).

2 disordered regions span residues 1-21 and 34-57; these read MPTINQLVRKPRKSKIEKSDS and VHTKLAAPQKRGVATRVGTMTPKK. 3-methylthioaspartic acid is present on D102.

The protein belongs to the universal ribosomal protein uS12 family. Part of the 30S ribosomal subunit. Contacts proteins S8 and S17. May interact with IF1 in the 30S initiation complex.

With S4 and S5 plays an important role in translational accuracy. Functionally, interacts with and stabilizes bases of the 16S rRNA that are involved in tRNA selection in the A site and with the mRNA backbone. Located at the interface of the 30S and 50S subunits, it traverses the body of the 30S subunit contacting proteins on the other side and probably holding the rRNA structure together. The combined cluster of proteins S8, S12 and S17 appears to hold together the shoulder and platform of the 30S subunit. The protein is Small ribosomal subunit protein uS12 of Streptococcus equi subsp. zooepidemicus (strain H70).